The sequence spans 140 residues: Putative pre-16S rRNA nuclease (140 aa).

The protein belongs to the YqgF nuclease family.

It localises to the cytoplasm. Its function is as follows. Could be a nuclease involved in processing of the 5'-end of pre-16S rRNA. This chain is Putative pre-16S rRNA nuclease, found in Parabacteroides distasonis (strain ATCC 8503 / DSM 20701 / CIP 104284 / JCM 5825 / NCTC 11152).